The sequence spans 75 residues: Probable protein BRICK1-A (75 aa).

Residues 41-72 (MSCRSRLATLNEKLTALERRIEYIEARVTKGE) are a coiled coil.

The protein belongs to the BRK1 family.

It is found in the cytoplasm. The protein resides in the cytoskeleton. Its function is as follows. Involved in regulation of actin and microtubule organization. Part of a WAVE complex that activates the Arp2/3 complex. The sequence is that of Probable protein BRICK1-A (brk1-a) from Xenopus laevis (African clawed frog).